Reading from the N-terminus, the 539-residue chain is Phosphoenolpyruvate carboxykinase (ATP) (539 aa).

Substrate-binding residues include Arg64, Tyr206, and Lys212. ATP is bound by residues Lys212, His231, and 247–255 (GLSGTGKTT). Positions 212 and 231 each coordinate Mn(2+). Asp268 contacts Mn(2+). ATP is bound by residues Glu296, Arg332, 448–449 (RI), and Thr454. Arg332 lines the substrate pocket.

It belongs to the phosphoenolpyruvate carboxykinase (ATP) family. As to quaternary structure, monomer. It depends on Mn(2+) as a cofactor.

Its subcellular location is the cytoplasm. The enzyme catalyses oxaloacetate + ATP = phosphoenolpyruvate + ADP + CO2. It participates in carbohydrate biosynthesis; gluconeogenesis. Its function is as follows. Involved in the gluconeogenesis. Catalyzes the conversion of oxaloacetate (OAA) to phosphoenolpyruvate (PEP) through direct phosphoryl transfer between the nucleoside triphosphate and OAA. The protein is Phosphoenolpyruvate carboxykinase (ATP) of Pectobacterium carotovorum subsp. carotovorum (strain PC1).